Here is a 554-residue protein sequence, read N- to C-terminus: Glucose-6-phosphate isomerase (554 aa).

The active-site Proton donor is the glutamate 358. Catalysis depends on residues histidine 389 and lysine 515.

This sequence belongs to the GPI family.

The protein localises to the cytoplasm. The catalysed reaction is alpha-D-glucose 6-phosphate = beta-D-fructose 6-phosphate. It participates in carbohydrate biosynthesis; gluconeogenesis. Its pathway is carbohydrate degradation; glycolysis; D-glyceraldehyde 3-phosphate and glycerone phosphate from D-glucose: step 2/4. Functionally, catalyzes the reversible isomerization of glucose-6-phosphate to fructose-6-phosphate. This chain is Glucose-6-phosphate isomerase, found in Mycobacterium leprae (strain Br4923).